We begin with the raw amino-acid sequence, 178 residues long: SsrA-binding protein (178 aa).

Residues 1 to 28 (MAKKSTPVDSGRSKGKKASAPRGGGPAV) form a disordered region.

The protein belongs to the SmpB family.

Its subcellular location is the cytoplasm. In terms of biological role, required for rescue of stalled ribosomes mediated by trans-translation. Binds to transfer-messenger RNA (tmRNA), required for stable association of tmRNA with ribosomes. tmRNA and SmpB together mimic tRNA shape, replacing the anticodon stem-loop with SmpB. tmRNA is encoded by the ssrA gene; the 2 termini fold to resemble tRNA(Ala) and it encodes a 'tag peptide', a short internal open reading frame. During trans-translation Ala-aminoacylated tmRNA acts like a tRNA, entering the A-site of stalled ribosomes, displacing the stalled mRNA. The ribosome then switches to translate the ORF on the tmRNA; the nascent peptide is terminated with the 'tag peptide' encoded by the tmRNA and targeted for degradation. The ribosome is freed to recommence translation, which seems to be the essential function of trans-translation. The protein is SsrA-binding protein of Corynebacterium urealyticum (strain ATCC 43042 / DSM 7109).